Reading from the N-terminus, the 198-residue chain is Ribosomal RNA small subunit methyltransferase G (198 aa).

S-adenosyl-L-methionine is bound by residues Gly-74, Phe-79, 123–124 (IQ), and Arg-136.

The protein belongs to the methyltransferase superfamily. RNA methyltransferase RsmG family.

The protein resides in the cytoplasm. It carries out the reaction guanosine(527) in 16S rRNA + S-adenosyl-L-methionine = N(7)-methylguanosine(527) in 16S rRNA + S-adenosyl-L-homocysteine. Functionally, specifically methylates the N7 position of guanine in position 527 of 16S rRNA. This is Ribosomal RNA small subunit methyltransferase G from Orientia tsutsugamushi (strain Ikeda) (Rickettsia tsutsugamushi).